Consider the following 437-residue polypeptide: UDP-N-acetylmuramoylalanine--D-glutamate ligase (437 aa).

115–121 (GSNGKST) is a binding site for ATP.

This sequence belongs to the MurCDEF family.

Its subcellular location is the cytoplasm. It catalyses the reaction UDP-N-acetyl-alpha-D-muramoyl-L-alanine + D-glutamate + ATP = UDP-N-acetyl-alpha-D-muramoyl-L-alanyl-D-glutamate + ADP + phosphate + H(+). It functions in the pathway cell wall biogenesis; peptidoglycan biosynthesis. Functionally, cell wall formation. Catalyzes the addition of glutamate to the nucleotide precursor UDP-N-acetylmuramoyl-L-alanine (UMA). The sequence is that of UDP-N-acetylmuramoylalanine--D-glutamate ligase from Vibrio campbellii (strain ATCC BAA-1116).